We begin with the raw amino-acid sequence, 425 residues long: Pectate lyase L (425 aa).

The N-terminal stretch at 1–25 (MKYLNCFISTGLAAFFLVNSTSVLA) is a signal peptide. A disulfide bridge connects residues cysteine 28 and cysteine 114. Aspartate 209, aspartate 233, aspartate 234, and aspartate 237 together coordinate Ca(2+). The active-site Proton acceptor is lysine 273. Ca(2+) is bound by residues asparagine 402, serine 413, alanine 416, aspartate 418, and glutamate 423.

It belongs to the polysaccharide lyase 9 family. Ca(2+) is required as a cofactor.

The protein localises to the secreted. The catalysed reaction is Eliminative cleavage of (1-&gt;4)-alpha-D-galacturonan to give oligosaccharides with 4-deoxy-alpha-D-galact-4-enuronosyl groups at their non-reducing ends.. It functions in the pathway glycan metabolism; pectin degradation; 2-dehydro-3-deoxy-D-gluconate from pectin: step 2/5. In terms of biological role, presents an endo-cleaving activity on polygalacturonate or partially methylated pectin. Is effective in the maceration of plant tissue, and has an important role in soft-rot disease. Is 280-fold less active against polygalacturonate than the major pectate lyase PelB. When assayed on polygalacturonate, PelL releases oligogalacturonates of different sizes; upon prolonged incubation, PelL degrades the primary products to unsaturated tetramer and pentamer in addition to unsaturated dimer and trimer. When assayed on oligogalacturonates (degrees of polymerization of 2 to 8), it preferentially forms unsaturated tetramer, and displays the highest activity on the octamer. The sequence is that of Pectate lyase L (pelL) from Dickeya dadantii (strain 3937) (Erwinia chrysanthemi (strain 3937)).